The primary structure comprises 160 residues: Transcription elongation factor GreA (160 aa).

The stretch at 11–38 (YDRLMKELERLKSERPAIIQAIKEAREE) forms a coiled coil.

The protein belongs to the GreA/GreB family.

Functionally, necessary for efficient RNA polymerase transcription elongation past template-encoded arresting sites. The arresting sites in DNA have the property of trapping a certain fraction of elongating RNA polymerases that pass through, resulting in locked ternary complexes. Cleavage of the nascent transcript by cleavage factors such as GreA or GreB allows the resumption of elongation from the new 3'terminus. GreA releases sequences of 2 to 3 nucleotides. In Nitratidesulfovibrio vulgaris (strain DSM 19637 / Miyazaki F) (Desulfovibrio vulgaris), this protein is Transcription elongation factor GreA.